Consider the following 129-residue polypeptide: MLDVDTARRRIVDLTDAVRAFCTAHDDGLCNVFVPHATAGVAIIETGAGSDEDLVDTLVRLLPRDDRYRHAHGSYGHGADHLLPAFVAPSVTVPVSGGQPLLGTWQSIVLVDLNQDNPRRSVRLSFVEG.

The protein belongs to the UPF0047 family.

In Mycobacterium bovis (strain ATCC BAA-935 / AF2122/97), this protein is UPF0047 protein Mb2586c.